A 471-amino-acid polypeptide reads, in one-letter code: MAAFTLWILVLNVFLLGFQARKLASNLKFPIQKCDDSTPQKNFNSFLWLVKRTPPAYFYGTIHVPYTRVWDFIPMNSKQAFTASQHVYFELDLTDEKTMRALMKCQMLPSGTMLRQTLPRKMFKRLKSHLRYIKRMIPKWIKHRDQETSSAGPYANKLYEMLTKDWDKKRPIWVMLMVNSLTESDIKTRGIPVLDQYLALEASRNHKLIGAVENVDEQCKPLNALNASQVVFALNQSLHFQERLRRGQVQVTYTTDDLIDHYNCGDLKSVLFSTQTSLPTLTVNSSLEQRERKRAQEIDQYFRNELIFQRNKRMAQRVITLLNNHPEKDFFFAFGAGHFLGNHSIIDIMKKHGYDVEYVKPEQELPSFKAKKSLNTRRERRKGCRGRRKKSKRCQKKKKRKRPDYSRVRLLQVATRRWNPTRKPYPTKLSEAPGARDISSRKAAASCTPIWTVSLALTCAVTCLLTYSGFR.

Residues 1–24 form the signal peptide; it reads MAAFTLWILVLNVFLLGFQARKLA. The Extracellular segment spans residues 25–449; it reads SNLKFPIQKC…SRKAAASCTP (425 aa). 4 N-linked (GlcNAc...) asparagine glycosylation sites follow: Asn-226, Asn-235, Asn-284, and Asn-342. A compositionally biased stretch (basic residues) spans 369 to 402; sequence KAKKSLNTRRERRKGCRGRRKKSKRCQKKKKRKR. Residues 369–406 are disordered; it reads KAKKSLNTRRERRKGCRGRRKKSKRCQKKKKRKRPDYS. A helical transmembrane segment spans residues 450–470; that stretch reads IWTVSLALTCAVTCLLTYSGF. Arg-471 is a topological domain (cytoplasmic).

The protein belongs to the TIKI family. Requires Mn(2+) as cofactor. The cofactor is Co(2+).

The protein localises to the membrane. Its function is as follows. Metalloprotease. This Nematostella vectensis (Starlet sea anemone) protein is Metalloprotease TIKI homolog.